A 342-amino-acid chain; its full sequence is Phenylalanine--tRNA ligase alpha subunit (342 aa).

E260 provides a ligand contact to Mg(2+).

It belongs to the class-II aminoacyl-tRNA synthetase family. Phe-tRNA synthetase alpha subunit type 1 subfamily. As to quaternary structure, tetramer of two alpha and two beta subunits. Mg(2+) serves as cofactor.

The protein localises to the cytoplasm. The catalysed reaction is tRNA(Phe) + L-phenylalanine + ATP = L-phenylalanyl-tRNA(Phe) + AMP + diphosphate + H(+). The polypeptide is Phenylalanine--tRNA ligase alpha subunit (Mycobacterium avium (strain 104)).